Consider the following 55-residue polypeptide: Small polypeptide DEVIL 10 (55 aa).

N-linked (GlcNAc...) asparagine glycosylation occurs at N7. Positions 19-50 are required for DVL/RTFL small polypeptide activity; sequence RFGDRCLLMAKQQRTRLYILRRCVSMLLCWHD. Residues 32 to 48 traverse the membrane as a helical segment; that stretch reads RTRLYILRRCVSMLLCW.

Belongs to the DVL/RTFL small polypeptides family.

It is found in the cell membrane. In terms of biological role, small polypeptide acting as a regulatory molecule which coordinates cellular responses required for differentiation, growth and development, probably by restricting polar cell proliferation in lateral organs and coordinating socket cell recruitment and differentiation at trichome sites. The chain is Small polypeptide DEVIL 10 from Arabidopsis thaliana (Mouse-ear cress).